A 119-amino-acid polypeptide reads, in one-letter code: Integration host factor subunit alpha (119 aa).

The tract at residues 96 to 119 (INGQQGSGKMNGEASHEQLSAEPE) is disordered.

This sequence belongs to the bacterial histone-like protein family. In terms of assembly, heterodimer of an alpha and a beta chain.

This protein is one of the two subunits of integration host factor, a specific DNA-binding protein that functions in genetic recombination as well as in transcriptional and translational control. The chain is Integration host factor subunit alpha from Bradyrhizobium sp. (strain BTAi1 / ATCC BAA-1182).